We begin with the raw amino-acid sequence, 95 residues long: Aspartyl/glutamyl-tRNA(Asn/Gln) amidotransferase subunit C (95 aa).

Belongs to the GatC family. Heterotrimer of A, B and C subunits.

The enzyme catalyses L-glutamyl-tRNA(Gln) + L-glutamine + ATP + H2O = L-glutaminyl-tRNA(Gln) + L-glutamate + ADP + phosphate + H(+). It carries out the reaction L-aspartyl-tRNA(Asn) + L-glutamine + ATP + H2O = L-asparaginyl-tRNA(Asn) + L-glutamate + ADP + phosphate + 2 H(+). Its function is as follows. Allows the formation of correctly charged Asn-tRNA(Asn) or Gln-tRNA(Gln) through the transamidation of misacylated Asp-tRNA(Asn) or Glu-tRNA(Gln) in organisms which lack either or both of asparaginyl-tRNA or glutaminyl-tRNA synthetases. The reaction takes place in the presence of glutamine and ATP through an activated phospho-Asp-tRNA(Asn) or phospho-Glu-tRNA(Gln). The protein is Aspartyl/glutamyl-tRNA(Asn/Gln) amidotransferase subunit C of Bartonella henselae (strain ATCC 49882 / DSM 28221 / CCUG 30454 / Houston 1) (Rochalimaea henselae).